The chain runs to 192 residues: Thymidine kinase (192 aa).

ATP is bound by residues 9–16 and 87–90; these read SAMNAGKS and DECQ. The active-site Proton acceptor is the E88. Zn(2+) is bound by residues C145, C147, C182, and H185.

This sequence belongs to the thymidine kinase family. As to quaternary structure, homotetramer.

It is found in the cytoplasm. It catalyses the reaction thymidine + ATP = dTMP + ADP + H(+). This is Thymidine kinase from Vibrio parahaemolyticus serotype O3:K6 (strain RIMD 2210633).